A 260-amino-acid chain; its full sequence is Small ribosomal subunit protein uS2 (260 aa).

Residues 223–260 (EGRQGEDEEEASQEVAEGVSKDSLEDLKKSVEEGSNEE) are disordered. Residues 241–254 (VSKDSLEDLKKSVE) are compositionally biased toward basic and acidic residues.

It belongs to the universal ribosomal protein uS2 family.

This is Small ribosomal subunit protein uS2 from Pediococcus pentosaceus (strain ATCC 25745 / CCUG 21536 / LMG 10740 / 183-1w).